Reading from the N-terminus, the 1028-residue chain is Contactin-3 (1028 aa).

Positions 1–19 (MMLSWKQLILLSFIGCLAG) are cleaved as a signal peptide. Ig-like C2-type domains follow at residues 32–117 (PSNS…AKLQ), 122–209 (ENFK…RVLG), 227–313 (PKIE…GRLT), 318–402 (PYWL…AELK), 408–497 (PDFS…LVVT), and 499–593 (PTRI…AELI). 5 disulfides stabilise this stretch: Cys-50-Cys-100, Cys-144-Cys-196, Cys-249-Cys-297, Cys-339-Cys-386, and Cys-431-Cys-479. Asn-65 and Asn-193 each carry an N-linked (GlcNAc...) asparagine glycan. Residues Asn-377, Asn-468, and Asn-489 are each glycosylated (N-linked (GlcNAc...) asparagine). Cysteines 521 and 577 form a disulfide. Fibronectin type-III domains lie at 600–698 (PPEN…TEEA), 703–800 (APSE…SAEE), 805–901 (APSH…TKKT), and 902–998 (PPSQ…TSMD). The tract at residues 684–714 (GEPSLPSEKVRTEEAAPEIAPSEVSGGGGSR) is disordered. N-linked (GlcNAc...) asparagine glycosylation is found at Asn-765, Asn-860, Asn-895, Asn-913, Asn-931, and Asn-956. A lipid anchor (GPI-anchor amidated serine) is attached at Ser-1002. Residues 1003-1028 (TSAISNIHPLSGYMSVLLFFIVNALW) constitute a propeptide, removed in mature form.

Belongs to the immunoglobulin superfamily. Contactin family. Interacts with PTPRG. As to expression, specifically expressed in brain. Ectopically expressed in tumors expressing endogenous intracisternal A-type particles (IAPs).

The protein resides in the cell membrane. Its function is as follows. Contactins mediate cell surface interactions during nervous system development. Has some neurite outgrowth-promoting activity. In Mus musculus (Mouse), this protein is Contactin-3 (Cntn3).